A 179-amino-acid chain; its full sequence is MSSRVLTPDVVGIDALVHDHQTVLAKAEGGVVAVFANNAPAFYAVTPARLAELLALEEKLARPGSDVALDEQLYQEPQAAPVAVPMGKFAMYPDWQPDADFIRLAALWGVALREPVTTEELASFIAYWQAEGKVFHHVQWQQKLARSLQIGRASNGGLPKRDVNTVSEPDSQIPPGFRG.

The tract at residues 156-179 (GGLPKRDVNTVSEPDSQIPPGFRG) is disordered.

This sequence belongs to the DnaT family. In terms of assembly, homooligomerizes. Interacts with PriB. Component of the replication restart primosome. Primosome assembly occurs via a 'hand-off' mechanism. PriA binds to replication forks, subsequently PriB then DnaT bind; DnaT then displaces ssDNA to generate the helicase loading substrate.

Its function is as follows. Involved in the restart of stalled replication forks, which reloads the replicative helicase on sites other than the origin of replication. Can function in multiple replication restart pathways. Displaces ssDNA from a PriB-ssDNA complex. Probably forms a spiral filament on ssDNA. The chain is Replication restart protein DnaT from Shigella dysenteriae serotype 1 (strain Sd197).